The primary structure comprises 53 residues: uncharacterized protein (53 aa).

Polar residues predominate over residues 1 to 10 (MHILTRSSKN). Residues 1-25 (MHILTRSSKNAFPRSRSRQDIHISS) are disordered.

This is an uncharacterized protein from Saccharomyces cerevisiae (strain ATCC 204508 / S288c) (Baker's yeast).